Consider the following 201-residue polypeptide: NADH-quinone oxidoreductase subunit I (201 aa).

4Fe-4S ferredoxin-type domains lie at 78–107 (MSYEKAKSRCVACYMCQTACPMPTLFRIEA) and 116–147 (KVVRFDMNLLNCLFCGLCVDACPVGCLTMTDI). 8 residues coordinate [4Fe-4S] cluster: Cys87, Cys90, Cys93, Cys97, Cys127, Cys130, Cys133, and Cys137.

The protein belongs to the complex I 23 kDa subunit family. In terms of assembly, NDH-1 is composed of 14 different subunits. Subunits NuoA, H, J, K, L, M, N constitute the membrane sector of the complex. It depends on [4Fe-4S] cluster as a cofactor.

The protein resides in the cell inner membrane. It carries out the reaction a quinone + NADH + 5 H(+)(in) = a quinol + NAD(+) + 4 H(+)(out). In terms of biological role, NDH-1 shuttles electrons from NADH, via FMN and iron-sulfur (Fe-S) centers, to quinones in the respiratory chain. The immediate electron acceptor for the enzyme in this species is believed to be ubiquinone. Couples the redox reaction to proton translocation (for every two electrons transferred, four hydrogen ions are translocated across the cytoplasmic membrane), and thus conserves the redox energy in a proton gradient. This Aquifex aeolicus (strain VF5) protein is NADH-quinone oxidoreductase subunit I.